Consider the following 142-residue polypeptide: ATP synthase epsilon chain (142 aa).

This sequence belongs to the ATPase epsilon chain family. In terms of assembly, F-type ATPases have 2 components, CF(1) - the catalytic core - and CF(0) - the membrane proton channel. CF(1) has five subunits: alpha(3), beta(3), gamma(1), delta(1), epsilon(1). CF(0) has three main subunits: a, b and c.

It is found in the cell inner membrane. Produces ATP from ADP in the presence of a proton gradient across the membrane. In Shewanella woodyi (strain ATCC 51908 / MS32), this protein is ATP synthase epsilon chain.